A 202-amino-acid polypeptide reads, in one-letter code: Holliday junction branch migration complex subunit RuvA (202 aa).

The segment at 1–64 (MISRLRGTVL…EDAFDLFGFL (64 aa)) is domain I. The tract at residues 65–143 (TKGEEEVFLL…TIHLEAVSRG (79 aa)) is domain II. The tract at residues 143–147 (GTAPA) is flexible linker. Residues 148–202 (AVSGAHADLVSALLNLGYKQPQAEKAADLASERLGAEATFQALFREALKALRSGG) form a domain III region.

Belongs to the RuvA family. As to quaternary structure, homotetramer. Forms an RuvA(8)-RuvB(12)-Holliday junction (HJ) complex. HJ DNA is sandwiched between 2 RuvA tetramers; dsDNA enters through RuvA and exits via RuvB. An RuvB hexamer assembles on each DNA strand where it exits the tetramer. Each RuvB hexamer is contacted by two RuvA subunits (via domain III) on 2 adjacent RuvB subunits; this complex drives branch migration. In the full resolvosome a probable DNA-RuvA(4)-RuvB(12)-RuvC(2) complex forms which resolves the HJ.

It localises to the cytoplasm. In terms of biological role, the RuvA-RuvB-RuvC complex processes Holliday junction (HJ) DNA during genetic recombination and DNA repair, while the RuvA-RuvB complex plays an important role in the rescue of blocked DNA replication forks via replication fork reversal (RFR). RuvA specifically binds to HJ cruciform DNA, conferring on it an open structure. The RuvB hexamer acts as an ATP-dependent pump, pulling dsDNA into and through the RuvAB complex. HJ branch migration allows RuvC to scan DNA until it finds its consensus sequence, where it cleaves and resolves the cruciform DNA. This is Holliday junction branch migration complex subunit RuvA from Myxococcus xanthus (strain DK1622).